Consider the following 275-residue polypeptide: 2,3,4,5-tetrahydropyridine-2,6-dicarboxylate N-succinyltransferase (275 aa).

Residues arginine 106 and aspartate 143 each coordinate substrate.

Belongs to the transferase hexapeptide repeat family. Homotrimer.

The protein localises to the cytoplasm. The catalysed reaction is (S)-2,3,4,5-tetrahydrodipicolinate + succinyl-CoA + H2O = (S)-2-succinylamino-6-oxoheptanedioate + CoA. It participates in amino-acid biosynthesis; L-lysine biosynthesis via DAP pathway; LL-2,6-diaminopimelate from (S)-tetrahydrodipicolinate (succinylase route): step 1/3. In Cupriavidus pinatubonensis (strain JMP 134 / LMG 1197) (Cupriavidus necator (strain JMP 134)), this protein is 2,3,4,5-tetrahydropyridine-2,6-dicarboxylate N-succinyltransferase.